The primary structure comprises 226 residues: Hand transcription factor 1 (226 aa).

Positions 1-15 (MVKSTTAGNNAVSSL) are enriched in polar residues. The segment at 1–35 (MVKSTTAGNNAVSSLESTDSKKSRKEKSREKEHRR) is disordered. Residues 23-36 (SRKEKSREKEHRRA) form a basic motif region. Residues 23-77 (SRKEKSREKEHRRAQCINSAFEILQQHIPYLKSEERKSLPKIKTLRLAMQYIDHL) form the bHLH domain. The segment at 37-77 (QCINSAFEILQQHIPYLKSEERKSLPKIKTLRLAMQYIDHL) is helix-loop-helix motif.

It is found in the nucleus. Its function is as follows. Probable transcription factor which regulates early embryonic myogenesis, in cooperation with transcription factors unc-120 and hlh-1. Involved in controlling the number and position of somatic gonadal precursor cells (SGPs) in the gonadal primordium, and embryonic body shape. In Caenorhabditis elegans, this protein is Hand transcription factor 1.